Reading from the N-terminus, the 61-residue chain is Small ribosomal subunit protein uS14 (61 aa).

Residues Cys24, Cys27, Cys40, and Cys43 each coordinate Zn(2+).

Belongs to the universal ribosomal protein uS14 family. Zinc-binding uS14 subfamily. As to quaternary structure, part of the 30S ribosomal subunit. Contacts proteins S3 and S10. Zn(2+) is required as a cofactor.

Binds 16S rRNA, required for the assembly of 30S particles and may also be responsible for determining the conformation of the 16S rRNA at the A site. The sequence is that of Small ribosomal subunit protein uS14 from Mycobacterium sp. (strain JLS).